The following is a 386-amino-acid chain: Succinate--CoA ligase [ADP-forming] subunit beta (386 aa).

The ATP site is built by lysine 46, glutamate 99, alanine 102, and glutamate 107. Mg(2+) contacts are provided by asparagine 199 and aspartate 213. Substrate contacts are provided by residues asparagine 264 and 321–323; that span reads GIM.

Belongs to the succinate/malate CoA ligase beta subunit family. As to quaternary structure, heterotetramer of two alpha and two beta subunits. Mg(2+) serves as cofactor.

It carries out the reaction succinate + ATP + CoA = succinyl-CoA + ADP + phosphate. The catalysed reaction is GTP + succinate + CoA = succinyl-CoA + GDP + phosphate. It functions in the pathway carbohydrate metabolism; tricarboxylic acid cycle; succinate from succinyl-CoA (ligase route): step 1/1. Functionally, succinyl-CoA synthetase functions in the citric acid cycle (TCA), coupling the hydrolysis of succinyl-CoA to the synthesis of either ATP or GTP and thus represents the only step of substrate-level phosphorylation in the TCA. The beta subunit provides nucleotide specificity of the enzyme and binds the substrate succinate, while the binding sites for coenzyme A and phosphate are found in the alpha subunit. In Orientia tsutsugamushi (strain Ikeda) (Rickettsia tsutsugamushi), this protein is Succinate--CoA ligase [ADP-forming] subunit beta.